Reading from the N-terminus, the 356-residue chain is MIELRPLLQLNLEDGIPVLKDLLTADSFSFTDVELLRYIPAIAKNTPAQTRDLAASVADALDVDQTTALAAIEALVELGLLVPSASISSQKAGIQLWVDKGWVDALILHFASRNLNYNDDPIEFGGLEDIKSYPEPMESKRRKRGTATRLVKPSRELAAAVILDGLMNRRSFKPFTRKQLSITEVSEILWFGNLYARERAVIAENRDFESPRDIAFDSAFSALSTFVVTYGQIDWQDGSLPPGVYRYNVVNHELEAIRAGDFKLDMAKLAIGQSRASSGLFTFVICGDLKSYTSRYRHERSYRNLLINTSQLAQFYLTLATINDFNTFLTPAIHDEKMHLFLEAEDDLPLYLVTAG.

The polypeptide is Trifolitoxin operon protein TfxC (tfxC) (Rhizobium leguminosarum bv. trifolii).